Consider the following 210-residue polypeptide: Small ribosomal subunit protein uS3 (210 aa).

A KH type-2 domain is found at 38 to 106 (LKSFLKKRLY…EVYLNIQEVR (69 aa)).

The protein belongs to the universal ribosomal protein uS3 family. Part of the 30S ribosomal subunit. Forms a tight complex with proteins S10 and S14.

Its function is as follows. Binds the lower part of the 30S subunit head. Binds mRNA in the 70S ribosome, positioning it for translation. The polypeptide is Small ribosomal subunit protein uS3 (Geotalea daltonii (strain DSM 22248 / JCM 15807 / FRC-32) (Geobacter daltonii)).